A 343-amino-acid chain; its full sequence is Ribosomal RNA small subunit methyltransferase C (343 aa).

It belongs to the methyltransferase superfamily. RsmC family. In terms of assembly, monomer.

Its subcellular location is the cytoplasm. It carries out the reaction guanosine(1207) in 16S rRNA + S-adenosyl-L-methionine = N(2)-methylguanosine(1207) in 16S rRNA + S-adenosyl-L-homocysteine + H(+). Functionally, specifically methylates the guanine in position 1207 of 16S rRNA in the 30S particle. The chain is Ribosomal RNA small subunit methyltransferase C from Escherichia coli O7:K1 (strain IAI39 / ExPEC).